A 600-amino-acid chain; its full sequence is MSRQSISLRFPLLLLLLSPSPVFSADPGAPAPVNPCCYYPCQHQGICVRFGLDRYQCDCTRTGYSGPNCTIPEIWTWLRTTLRPSPSFIHFLLTHGRWLWDFVNATFIRDTLMRLVLTVRSNLIPSPPTYNIAHDYISWESFSNVSYYTRILPSVPRDCPTPMDTKGKKQLPDAEFLSRRFLLRRKFIPDPQSTNLMFAFFAQHFTHQFFKTSGKMGPGFTKALGHGVDLGHIYGDNLERQYQLRLFKDGKLKYQMLNGEVYPPSVEEAPVLMHYPRGIPPQSQMAVGQEVFGLLPGLMLYATIWLREHNRVCDLLKAEHPTWGDEQLFQTARLILIGETIKIVIEEYVQQLSGYFLQLKFDPELLFGAQFQYRNRIAMEFNQLYHWHPLMPDSFRVGPQDYSYEQFLFNTSMLVDYGVEALVDAFSRQPAGRIGGGRNIDHHILHVAVDVIKESRVLRLQPFNEYRKRFGMKPYTSFQELTGEKEMAAELEELYGDIDALEFYPGLLLEKCHPNSIFGESMIEMGAPFSLKGLLGNPICSPEYWKASTFGGEVGFNLVKTATLKKLVCLNTKTCPYVSFHVPDPRQEDRPGVERPPTEL.

The first 24 residues, 1–24 (MSRQSISLRFPLLLLLLSPSPVFS), serve as a signal peptide directing secretion. Residues 32–70 (PVNPCCYYPCQHQGICVRFGLDRYQCDCTRTGYSGPNCT) enclose the EGF-like domain. Disulfide bonds link Cys-36–Cys-47, Cys-37–Cys-159, Cys-41–Cys-57, and Cys-59–Cys-69. Asn-68 is a glycosylation site (N-linked (GlcNAc...) asparagine). Helical transmembrane passes span 74–82 (IWTWLRTTL), 86–92 (PSFIHFL), 97–105 (RWLWDFVNA), and 108–122 (IRDT…VRSN). A glycan (N-linked (GlcNAc...) asparagine) is linked at Asn-144. His-207 functions as the Proton acceptor in the catalytic mechanism. The For cyclooxygenase activity role is filled by Tyr-385. Position 388 (His-388) interacts with heme b. A glycan (N-linked (GlcNAc...) asparagine) is linked at Asn-410. Cysteines 569 and 575 form a disulfide.

The protein belongs to the prostaglandin G/H synthase family. In terms of assembly, homodimer. The cofactor is heme b.

It localises to the endoplasmic reticulum membrane. Its subcellular location is the microsome membrane. It catalyses the reaction (5Z,8Z,11Z,14Z)-eicosatetraenoate + AH2 + 2 O2 = prostaglandin H2 + A + H2O. The catalysed reaction is (5Z,8Z,11Z,14Z)-eicosatetraenoate + 2 O2 = prostaglandin G2. It carries out the reaction prostaglandin G2 + AH2 = prostaglandin H2 + A + H2O. The enzyme catalyses (9Z,12Z)-octadecadienoate + AH2 + O2 = (9R)-hydroxy-(10E,12Z)-octadecadienoate + A + H2O. It catalyses the reaction (9Z,12Z)-octadecadienoate + AH2 + O2 = (9S)-hydroxy-(10E,12Z)-octadecadienoate + A + H2O. The catalysed reaction is (9Z,12Z)-octadecadienoate + AH2 + O2 = (13S)-hydroxy-(9Z,11E)-octadecadienoate + A + H2O. It carries out the reaction (9Z,12Z)-octadecadienoate + AH2 + O2 = (13R)-hydroxy-(9Z,11E)-octadecadienoate + A + H2O. Its pathway is lipid metabolism; prostaglandin biosynthesis. The cyclooxygenase activity is inhibited by nonsteroidal anti-inflammatory drugs (NSAIDs) including ibuprofen, flurbiprofen, ketoprofen, naproxen, flurbiprofen, anirolac, fenclofenac and diclofenac. Its function is as follows. Dual cyclooxygenase and peroxidase that plays an important role in the biosynthesis pathway of prostanoids, a class of C20 oxylipins mainly derived from arachidonate ((5Z,8Z,11Z,14Z)-eicosatetraenoate, AA, C20:4(n-6)), with a particular role in the inflammatory response. The cyclooxygenase activity oxygenates AA to the hydroperoxy endoperoxide prostaglandin G2 (PGG2), and the peroxidase activity reduces PGG2 to the hydroxy endoperoxide prostaglandin H2 (PGH2), the precursor of all 2-series prostaglandins and thromboxanes. This complex transformation is initiated by abstraction of hydrogen at carbon 13 (with S-stereochemistry), followed by insertion of molecular O2 to form the endoperoxide bridge between carbon 9 and 11 that defines prostaglandins. The insertion of a second molecule of O2 (bis-oxygenase activity) yields a hydroperoxy group in PGG2 that is then reduced to PGH2 by two electrons. Involved in the constitutive production of prostanoids in particular in the stomach and platelets. In gastric epithelial cells, it is a key step in the generation of prostaglandins, such as prostaglandin E2 (PGE2), which plays an important role in cytoprotection. In platelets, it is involved in the generation of thromboxane A2 (TXA2), which promotes platelet activation and aggregation, vasoconstriction and proliferation of vascular smooth muscle cells. Can also use linoleate (LA, (9Z,12Z)-octadecadienoate, C18:2(n-6)) as substrate and produce hydroxyoctadecadienoates (HODEs) in a regio- and stereospecific manner, being (9R)-HODE ((9R)-hydroxy-(10E,12Z)-octadecadienoate) and (13S)-HODE ((13S)-hydroxy-(9Z,11E)-octadecadienoate) its major products. The polypeptide is Prostaglandin G/H synthase 1 (PTGS1) (Ovis aries (Sheep)).